The primary structure comprises 877 residues: DNA polymerase I (877 aa).

The 91-residue stretch at 180–270 folds into the 5'-3' exonuclease domain; it reads TPAQFIDLKA…EIGLDDTLLK (91 aa). The region spanning 308 to 468 is the 3'-5' exonuclease domain; sequence DEIDFEIVTD…AKEKMMAELL (161 aa).

The protein belongs to the DNA polymerase type-A family. Single-chain monomer with multiple functions.

It catalyses the reaction DNA(n) + a 2'-deoxyribonucleoside 5'-triphosphate = DNA(n+1) + diphosphate. In terms of biological role, in addition to polymerase activity, this DNA polymerase exhibits 3'-5' and 5'-3' exonuclease activity. In Lactococcus lactis subsp. lactis (strain IL1403) (Streptococcus lactis), this protein is DNA polymerase I (polA).